We begin with the raw amino-acid sequence, 182 residues long: uncharacterized protein (182 aa).

Residues 66 to 133 (QKRKRREIKV…NLEIETNSDS (68 aa)) are a coiled coil.

This is an uncharacterized protein from Acanthamoeba polyphaga (Amoeba).